The chain runs to 272 residues: METYAVFGNPIAHSKSPFIHQQFAQQLNIEHPYGRVLAPINDFINTLNAFFSAGGKGANVTVPFKEEAFARADELTERATLAGAVNTLKRLEDGRLLGDNTDGIGLLSDLERLSFIRPGLRILLIGAGGASRGVLLPLLSLDCAVTITNRTVSRAEELAKLFAHTGSIHALGMDELEGHEFDLIINATSSGISGDIPAIPASLIHSGMCCYDMFYQKGKTPFLAWCELRGSKRNADGLGMLVAQAAHAFLLWHGVLPDIEPVIKQLQEELSA.

Residues 14-16 (SKS) and T61 each bind shikimate. The active-site Proton acceptor is K65. Residue E77 coordinates NADP(+). 2 residues coordinate shikimate: N86 and D102. NADP(+) is bound by residues 126–130 (GAGGA), 149–154 (NRTVSR), and M213. Y215 lines the shikimate pocket. G237 contributes to the NADP(+) binding site.

It belongs to the shikimate dehydrogenase family. In terms of assembly, homodimer.

It catalyses the reaction shikimate + NADP(+) = 3-dehydroshikimate + NADPH + H(+). It functions in the pathway metabolic intermediate biosynthesis; chorismate biosynthesis; chorismate from D-erythrose 4-phosphate and phosphoenolpyruvate: step 4/7. Involved in the biosynthesis of the chorismate, which leads to the biosynthesis of aromatic amino acids. Catalyzes the reversible NADPH linked reduction of 3-dehydroshikimate (DHSA) to yield shikimate (SA). This chain is Shikimate dehydrogenase (NADP(+)), found in Escherichia coli (strain SMS-3-5 / SECEC).